The chain runs to 409 residues: Serine/threonine transporter SstT (409 aa).

A run of 8 helical transmembrane segments spans residues 24–44, 48–68, 82–102, 142–162, 194–214, 218–238, 292–312, and 319–339; these read LALG…AGLF, FVGA…AATI, IIVL…IAGM, AIAN…GAAL, LGIF…ALAG, LLAV…PAIV, IPLG…VLAM, and GITV…VSAC.

It belongs to the dicarboxylate/amino acid:cation symporter (DAACS) (TC 2.A.23) family.

Its subcellular location is the cell inner membrane. The enzyme catalyses L-serine(in) + Na(+)(in) = L-serine(out) + Na(+)(out). The catalysed reaction is L-threonine(in) + Na(+)(in) = L-threonine(out) + Na(+)(out). In terms of biological role, involved in the import of serine and threonine into the cell, with the concomitant import of sodium (symport system). The protein is Serine/threonine transporter SstT of Neisseria meningitidis serogroup B (strain ATCC BAA-335 / MC58).